A 422-amino-acid polypeptide reads, in one-letter code: Phytoene synthase 1, chloroplastic (422 aa).

A chloroplast-targeting transit peptide spans 1–70 (MSSSVAVLWV…NRSRRIGVVS (70 aa)).

Belongs to the phytoene/squalene synthase family. Monomer. Interacts with OR. Interacts with ORLIKE.

It localises to the plastid. The protein localises to the chloroplast membrane. It carries out the reaction 2 (2E,6E,10E)-geranylgeranyl diphosphate = 15-cis-phytoene + 2 diphosphate. The protein operates within carotenoid biosynthesis; phytoene biosynthesis; all-trans-phytoene from geranylgeranyl diphosphate: step 1/1. Its function is as follows. Catalyzes the reaction from prephytoene diphosphate to phytoene. The polypeptide is Phytoene synthase 1, chloroplastic (Arabidopsis thaliana (Mouse-ear cress)).